A 241-amino-acid chain; its full sequence is Chlorophyll a-b binding protein 6, chloroplastic (241 aa).

The N-terminal 35 residues, 1–35 (MASNSLMSCGIAAVYPSLLSSSKSKFVSAGVPLPN), are a transit peptide targeting the chloroplast. Residue Trp48 participates in chlorophyll b binding. Chlorophyll a-binding residues include Phe68, Glu87, and His90. Arg92 is a chlorophyll b binding site. The chain crosses the membrane as a helical span at residues 93 to 113 (WAMLAVPGILVPEALGYGNWV). Leu129 contributes to the chlorophyll a binding site. Residues 132 to 152 (PVPWGTLPTILAIEFLAIAFV) form a helical membrane-spanning segment. The chlorophyll b site is built by Val133, Glu153, and Arg156. Chlorophyll a is bound by residues Lys190, Glu191, Asn194, Arg196, Gln208, and His224. A helical membrane pass occupies residues 197–217 (LALLAFVGFCVQQSAYPGTGP).

Belongs to the light-harvesting chlorophyll a/b-binding (LHC) protein family. The LHC complex consists of chlorophyll a-b binding proteins. Red-emitting heterodimer with LHCA4. Interacts with LHCA5. The cofactor is Binds at least 14 chlorophylls (8 Chl-a and 6 Chl-b) and carotenoids such as lutein and neoxanthin.. In terms of processing, photoregulated by reversible phosphorylation of its threonine residues.

The protein resides in the plastid. It localises to the chloroplast thylakoid membrane. Its function is as follows. The light-harvesting complex (LHC) functions as a light receptor, it captures and delivers excitation energy to photosystems with which it is closely associated. In Arabidopsis thaliana (Mouse-ear cress), this protein is Chlorophyll a-b binding protein 6, chloroplastic.